Reading from the N-terminus, the 68-residue chain is DNA-directed RNA polymerase subunit omega (68 aa).

The protein belongs to the RNA polymerase subunit omega family. In terms of assembly, the RNAP catalytic core consists of 2 alpha, 1 beta, 1 beta' and 1 omega subunit. When a sigma factor is associated with the core the holoenzyme is formed, which can initiate transcription.

It carries out the reaction RNA(n) + a ribonucleoside 5'-triphosphate = RNA(n+1) + diphosphate. Functionally, promotes RNA polymerase assembly. Latches the N- and C-terminal regions of the beta' subunit thereby facilitating its interaction with the beta and alpha subunits. The polypeptide is DNA-directed RNA polymerase subunit omega (Desulforapulum autotrophicum (strain ATCC 43914 / DSM 3382 / VKM B-1955 / HRM2) (Desulfobacterium autotrophicum)).